The chain runs to 332 residues: Nuclear migration protein nudC (332 aa).

The interval 122 to 161 (RQQLLDSAGGEPSASNRDGISKPIEKVDDESDKSELGKLM) is disordered. Positions 168–259 (CTLENYTWTQ…NKMNWWSRLV (92 aa)) constitute a CS domain.

This sequence belongs to the nudC family. As to quaternary structure, interacts with PCID2.

It is found in the cytoplasm. Chaperone protein with functions in nuclear localization and cytoplasmic mRNA trafficking. In postmitotic neurons, acts with nudE downstream of dar1 to ensure correct positioning of the nuclei in primary dendrites and as a consequence, is required for determining multipolar neuron morphology. Stabilizes PCID2 in the cytoplasm and thereby is required for promoting cytoplasmic mRNA trafficking. The chain is Nuclear migration protein nudC from Drosophila melanogaster (Fruit fly).